Here is a 954-residue protein sequence, read N- to C-terminus: Isoleucine--tRNA ligase (954 aa).

The 'HIGH' region signature appears at 60–70 (PYANGALHMGH). Residue glutamate 564 coordinates L-isoleucyl-5'-AMP. Positions 605–609 (KMSKS) match the 'KMSKS' region motif. Lysine 608 is an ATP binding site. Residues cysteine 923, cysteine 926, cysteine 943, and cysteine 946 each coordinate Zn(2+).

It belongs to the class-I aminoacyl-tRNA synthetase family. IleS type 1 subfamily. Monomer. The cofactor is Zn(2+).

The protein resides in the cytoplasm. The enzyme catalyses tRNA(Ile) + L-isoleucine + ATP = L-isoleucyl-tRNA(Ile) + AMP + diphosphate. Its function is as follows. Catalyzes the attachment of isoleucine to tRNA(Ile). As IleRS can inadvertently accommodate and process structurally similar amino acids such as valine, to avoid such errors it has two additional distinct tRNA(Ile)-dependent editing activities. One activity is designated as 'pretransfer' editing and involves the hydrolysis of activated Val-AMP. The other activity is designated 'posttransfer' editing and involves deacylation of mischarged Val-tRNA(Ile). This chain is Isoleucine--tRNA ligase, found in Synechococcus sp. (strain ATCC 27144 / PCC 6301 / SAUG 1402/1) (Anacystis nidulans).